The sequence spans 342 residues: MANVALLSAASPSTSSAAPRLRHVARRRPSRRSACPRSAASRLSIMAALGEDPIRQWILTEGKATKITGVSSIGGGCINSAQCYKTDASSFFVKTNGRIGPSMFEGEALGLKAMYDTNSIRVPLPYKVGSLPTGGSFIIMEFIEFGCSRGDQSALGRKLAEMHKAAKSDKGYGFYVDNTIGSTPQINTWTADWIEFYSKHRLGFQLELITQRFGDSAIYDKGQRLIENMHPLFEGAVMEPCLLHGDLWSGNISSDTNGEPVILDPACYYGHNEAEFGMSWCAGFGGEFYSSYFEVMPKQPGFEKRRDLYLLYHYLNHYNLFGSGYRSSAMSIIDDYLRMLKA.

The N-terminal 46 residues, 1-46, are a transit peptide targeting the chloroplast; that stretch reads MANVALLSAASPSTSSAAPRLRHVARRRPSRRSACPRSAASRLSIM. 141-143 provides a ligand contact to ATP; it reads EFI. Asp246 functions as the Proton acceptor in the catalytic mechanism.

It belongs to the fructosamine kinase family.

Its subcellular location is the plastid. It is found in the chloroplast. The catalysed reaction is N(6)-D-ribulosyl-L-lysyl-[protein] + ATP = N(6)-(3-O-phospho-D-ribulosyl)-L-lysyl-[protein] + ADP + H(+). It carries out the reaction N(6)-(D-erythrulosyl)-L-lysyl-[protein] + ATP = N(6)-(3-O-phospho-D-erythrulosyl)-L-lysyl-[protein] + ADP + H(+). Its function is as follows. Initiates a process leading to the deglycation of proteins. Phosphorylates low-molecular-mass and protein-bound erythrulosamines and ribulosamines, but not fructosamines or psicosamines, on the third carbon of the sugar moiety. Protein-bound erythrulosamine 3-phosphates and ribulosamine 3-phosphates are unstable and decompose under physiological conditions. This chain is Protein-ribulosamine 3-kinase, chloroplastic, found in Oryza sativa subsp. japonica (Rice).